Consider the following 386-residue polypeptide: Ferrochelatase (386 aa).

Residues H196 and E277 each contribute to the Fe cation site.

The protein belongs to the ferrochelatase family.

Its subcellular location is the cytoplasm. The catalysed reaction is heme b + 2 H(+) = protoporphyrin IX + Fe(2+). Its pathway is porphyrin-containing compound metabolism; protoheme biosynthesis; protoheme from protoporphyrin-IX: step 1/1. Catalyzes the ferrous insertion into protoporphyrin IX. The chain is Ferrochelatase from Picosynechococcus sp. (strain ATCC 27264 / PCC 7002 / PR-6) (Agmenellum quadruplicatum).